The primary structure comprises 431 residues: Reticulon-like protein B17 (431 aa).

Disordered regions lie at residues 1–110 (MEST…SEAV) and 126–152 (PPRKRKTNGRPKKDKQSSAPPLCSSSD). A compositionally biased stretch (polar residues) spans 12–26 (TKSASRLQDSSNPPN). Positions 126–138 (PPRKRKTNGRPKK) are enriched in basic residues. Residues 142–152 (SSAPPLCSSSD) show a composition bias toward polar residues. In terms of domain architecture, Reticulon spans 168-355 (ISDLVMWRDV…VTAFWNLTSI (188 aa)). 4 consecutive transmembrane segments (helical) span residues 177 to 197 (VAKSTLWFGFGCLSFLSSCFA), 202 to 222 (FSVFSAVSNLGLVLLCGSFLS), 286 to 306 (YGHLITLWRLSAFGFFLSFTI), and 349 to 369 (FWNLTSIRTRIFAVFIILVIF). The segment covering 382 to 415 (EVEPVENEQEEETLPQEEETVPQEEETVPQEEEQ) has biased composition (acidic residues). Residues 382 to 422 (EVEPVENEQEEETLPQEEETVPQEEETVPQEEEQTQPSEER) form a disordered region.

The protein resides in the endoplasmic reticulum membrane. In Arabidopsis thaliana (Mouse-ear cress), this protein is Reticulon-like protein B17 (RTNLB17).